Consider the following 465-residue polypeptide: UDP-N-acetylmuramate--L-alanine ligase (465 aa).

112-118 (GTHGKTT) is an ATP binding site.

This sequence belongs to the MurCDEF family.

It localises to the cytoplasm. The enzyme catalyses UDP-N-acetyl-alpha-D-muramate + L-alanine + ATP = UDP-N-acetyl-alpha-D-muramoyl-L-alanine + ADP + phosphate + H(+). The protein operates within cell wall biogenesis; peptidoglycan biosynthesis. In terms of biological role, cell wall formation. The polypeptide is UDP-N-acetylmuramate--L-alanine ligase (Burkholderia orbicola (strain MC0-3)).